Consider the following 181-residue polypeptide: tRNA (cytidine(56)-2'-O)-methyltransferase (181 aa).

Residues Leu88, 115–119 (GGEKV), and 133–140 (IGNQPHSE) each bind S-adenosyl-L-methionine.

It belongs to the aTrm56 family. In terms of assembly, homodimer.

It localises to the cytoplasm. The catalysed reaction is cytidine(56) in tRNA + S-adenosyl-L-methionine = 2'-O-methylcytidine(56) in tRNA + S-adenosyl-L-homocysteine + H(+). Its function is as follows. Specifically catalyzes the AdoMet-dependent 2'-O-ribose methylation of cytidine at position 56 in tRNAs. The chain is tRNA (cytidine(56)-2'-O)-methyltransferase from Thermofilum pendens (strain DSM 2475 / Hrk 5).